We begin with the raw amino-acid sequence, 118 residues long: Small ribosomal subunit protein uS13 (118 aa).

The interval 93 to 118 is disordered; that stretch reads RNLPVRGQRSKTNARTRKGPRKPIKR.

It belongs to the universal ribosomal protein uS13 family. Part of the 30S ribosomal subunit. Forms a loose heterodimer with protein S19. Forms two bridges to the 50S subunit in the 70S ribosome.

Located at the top of the head of the 30S subunit, it contacts several helices of the 16S rRNA. In the 70S ribosome it contacts the 23S rRNA (bridge B1a) and protein L5 of the 50S subunit (bridge B1b), connecting the 2 subunits; these bridges are implicated in subunit movement. Contacts the tRNAs in the A and P-sites. The protein is Small ribosomal subunit protein uS13 of Saccharophagus degradans (strain 2-40 / ATCC 43961 / DSM 17024).